A 241-amino-acid polypeptide reads, in one-letter code: Tumor necrosis factor receptor superfamily member grnd (241 aa).

A signal peptide spans 1–27 (MSVRKLSALSLSIGGVPLIPSVSLVAA). The Extracellular segment spans residues 28-98 (ANGESRDCHG…EMLDIQNTQQ (71 aa)). Intrachain disulfides connect Cys35–Cys47, Cys40–Cys54, Cys57–Cys77, and Cys61–Cys73. N-linked (GlcNAc...) asparagine glycosylation is present at Asn63. Residues 99-119 (LILLLLTILLVLIALRCAFQF) form a helical membrane-spanning segment. The Cytoplasmic portion of the chain corresponds to 120–241 (LRWLIGNRCF…PSAATIPVAF (122 aa)).

In terms of assembly, interacts (via extracellular cysteine-rich domain) with egr (via secreted TNF-homology soluble form); forms heterohexamers when 3 copies associate with egr trimers. Interacts with Traf6/TRAF2 and veli (via PDZ domain). N-glycosylated on Asn-63. Glycosylation regulates ligand binding, specifically reducing affinity for the TNF egr, thereby inhibiting activation of JNK signaling. In terms of tissue distribution, expressed in the adult midgut; under normal conditions expressed at lower levels than the other TNF receptor wgn.

The protein localises to the apical cell membrane. Its subcellular location is the cytoplasmic vesicle membrane. Functionally, acts as a receptor for TNF-cytokine egr. Plays a role in activation of JNK signaling and is required for egr-induced apoptosis, including in wing imaginal discs during development. May also play an egr-independent role in cell proliferation. TNF receptor involved in triggering JNK-dependent proliferation of the enteroblast-enterocyte lineage in response to stress-induced release of egr by intestinal stem cells and enteroblasts. Involved in regulation of insulin production in response to dietary protein shortage keeping systemic growth in check. Activation in brain insulin producing cells through binding of egr released into the hemolymph in response to dietary amino acid shortage, results in JNK-dependent inhibition of insulin production. This chain is Tumor necrosis factor receptor superfamily member grnd, found in Drosophila melanogaster (Fruit fly).